The chain runs to 337 residues: Aspartate carbamoyltransferase catalytic subunit (337 aa).

Carbamoyl phosphate is bound by residues Arg54 and Thr55. Lys82 is an L-aspartate binding site. Positions 104, 134, and 137 each coordinate carbamoyl phosphate. L-aspartate is bound by residues Arg177 and Arg232. Carbamoyl phosphate-binding residues include Gly277 and Pro278.

It belongs to the aspartate/ornithine carbamoyltransferase superfamily. ATCase family. As to quaternary structure, heterododecamer (2C3:3R2) of six catalytic PyrB chains organized as two trimers (C3), and six regulatory PyrI chains organized as three dimers (R2).

The enzyme catalyses carbamoyl phosphate + L-aspartate = N-carbamoyl-L-aspartate + phosphate + H(+). Its pathway is pyrimidine metabolism; UMP biosynthesis via de novo pathway; (S)-dihydroorotate from bicarbonate: step 2/3. Functionally, catalyzes the condensation of carbamoyl phosphate and aspartate to form carbamoyl aspartate and inorganic phosphate, the committed step in the de novo pyrimidine nucleotide biosynthesis pathway. This is Aspartate carbamoyltransferase catalytic subunit from Arthrobacter sp. (strain FB24).